A 239-amino-acid chain; its full sequence is Fatty acid metabolism regulator protein (239 aa).

An HTH gntR-type domain is found at 6–74; that stretch reads QSPAGFAEEY…HGKPTKVNNF (69 aa). A DNA-binding region (H-T-H motif) is located at residues 34–53; it reads ERELSELIGVTRTTLREVLQ.

As to quaternary structure, homodimer.

The protein localises to the cytoplasm. Functionally, multifunctional regulator of fatty acid metabolism. The polypeptide is Fatty acid metabolism regulator protein (Serratia proteamaculans (strain 568)).